The following is a 147-amino-acid chain: Myoglobin (147 aa).

Positions 2–141 constitute a Globin domain; that stretch reads ADHDLVLKCW…VIGDIDGYYK (140 aa). His60 is a binding site for nitrite. Residue His60 coordinates O2. His89 is a heme b binding site.

The protein belongs to the globin family. As to quaternary structure, monomeric.

The protein resides in the cytoplasm. The protein localises to the sarcoplasm. The enzyme catalyses Fe(III)-heme b-[protein] + nitric oxide + H2O = Fe(II)-heme b-[protein] + nitrite + 2 H(+). It catalyses the reaction H2O2 + AH2 = A + 2 H2O. Monomeric heme protein which primary function is to store oxygen and facilitate its diffusion within muscle tissues. Reversibly binds oxygen through a pentacoordinated heme iron and enables its timely and efficient release as needed during periods of heightened demand. Depending on the oxidative conditions of tissues and cells, and in addition to its ability to bind oxygen, it also has a nitrite reductase activity whereby it regulates the production of bioactive nitric oxide. Under stress conditions, like hypoxia and anoxia, it also protects cells against reactive oxygen species thanks to its pseudoperoxidase activity. The protein is Myoglobin (mb) of Danio rerio (Zebrafish).